A 276-amino-acid chain; its full sequence is uncharacterized protein (276 aa).

15 to 22 (GKGGVGKS) is a binding site for ATP. 4Fe-4S ferredoxin-type domains are found at residues 68–96 (EIYEINDDCIRCGKCLDVCQFDAIGDFKI) and 92–121 (GDFKINPILCEGCGACELICEFDAIEPIKR). [4Fe-4S] cluster contacts are provided by C76, C79, C82, C86, C101, C104, C107, and C111.

This is an uncharacterized protein from Methanocaldococcus jannaschii (strain ATCC 43067 / DSM 2661 / JAL-1 / JCM 10045 / NBRC 100440) (Methanococcus jannaschii).